The primary structure comprises 2374 residues: Genome polyprotein (2374 aa).

G115 carries N-myristoyl glycine; by host lipidation. Disordered stretches follow at residues 144 to 176 and 707 to 739; these read GDMP…GNVV and GADG…FDYP. The span at 157–174 shows a compositional bias: low complexity; sequence GSNKGGSSTSPKSTSNGN. The segment covering 716–728 has biased composition (polar residues); that stretch reads APTSDLSDGNPTT. An SF3 helicase domain is found at 1361-1525; it reads YSTALSAISL…VAFSAAAALQ (165 aa). 1387–1394 is an ATP binding site; the sequence is GPPGTGKS. G1600 is lipidated: N-myristoyl glycine; by host. A helical membrane pass occupies residues 1649–1669; it reads IFAASSFLSLIAATLTIVRCL. The tract at residues 1677–1699 is disordered; the sequence is GAYSGTPVPKPRKKDLPKQPVYS. Y1679 bears the O-(5'-phospho-RNA)-tyrosine mark. The Peptidase C3 domain occupies 1700–1889; it reads GPVRRQGFDP…FSARLTPERV (190 aa). Catalysis depends on for protease 3C activity residues H1748, E1779, and C1852. A RdRp catalytic domain is found at 2126-2243; sequence SNVWSIDYSC…GSNQDFHPRE (118 aa). Active-site for RdRp activity residues include D2132 and D2229.

In terms of assembly, interacts with capsid protein VP1. Interacts with capsid protein VP3. As to quaternary structure, interacts with capsid protein VP0. Interacts with capsid protein VP3. Interacts with capsid protein VP0. Interacts with capsid protein VP1. In terms of assembly, homodimer. Interacts with protein 2B. Interacts with protein 2C. As to quaternary structure, homodimer. Interacts with host ABCD3. Interacts with protein 2A. Interacts with host ACBD3. Homodimer. Interacts with host ABCD3. Interacts with protein 2A. Interacts with protein 3A. Interacts with protein 3C. Interacts with host ACBD3. In terms of assembly, homodimer. Interacts with host ABCD3 (via GOLD domain) and PI4KB; these interactions allow the formation of a viral protein/ACBD3/PI4KB complex in order to synthesize PI4P at the viral RNA replication sites. Interacts with protein 2C. Interacts with protein 3C. Protein 3C: Interacts with protein 2A. Protein 3C: Interacts with protein 2C. Post-translationally, specific enzymatic cleavages by the viral protease in vivo yield a variety of precursors and mature proteins. The leader protein-VP0 junction is cleaved by 3C proteinase. The VP1/2A junction is cleaved by the protein 3CD in association with protein 2A. In terms of processing, uridylylated by the polymerase and is covalently linked to the 5'-end of genomic RNA. This uridylylated form acts as a nucleotide-peptide primer for the polymerase.

Its subcellular location is the virion. It is found in the host cytoplasm. The protein localises to the host cytoplasmic vesicle membrane. The protein resides in the host Golgi apparatus membrane. The enzyme catalyses Selective cleavage of Gln-|-Gly bond in the poliovirus polyprotein. In other picornavirus reactions Glu may be substituted for Gln, and Ser or Thr for Gly.. It carries out the reaction RNA(n) + a ribonucleoside 5'-triphosphate = RNA(n+1) + diphosphate. It catalyses the reaction ATP + H2O = ADP + phosphate + H(+). Its function is as follows. Required for viral RNA replication and viral RNA encapsidation. Does not have any proteolytic activity. Functionally, forms an icosahedral capsid of pseudo T=3 symmetry with capsid proteins VP0 and VP3. Together they form an icosahedral capsid composed of 60 copies of each VP0, VP1, and VP3. All the three latter proteins contain a beta-sheet structure called beta-barrel jelly roll. In terms of biological role, forms an icosahedral capsid of pseudo T=3 symmetry with capsid proteins VP1 and VP3. Together they form an icosahedral capsid composed of 60 copies of each VP0, VP1, and VP3. All the three latter proteins contain a beta-sheet structure called beta-barrel jelly roll. Forms an icosahedral capsid of pseudo T=3 symmetry with capsid proteins VP0 and VP1. Together they form an icosahedral capsid composed of 60 copies of each VP0, VP1, and VP3. All the three latter proteins contain a beta-sheet structure called beta-barrel jelly roll. Its function is as follows. Required for viral RNA replication. Does not have any proteolytic activity. Functionally, affects membrane integrity and causes an increase in membrane permeability. In terms of biological role, induces and associates with structural rearrangements of intracellular membranes. Displays RNA-binding, nucleotide binding and NTPase activities. May play a role in virion morphogenesis and viral RNA encapsidation by interacting with the capsid protein VP3. Serves as membrane anchor via its hydrophobic domain. Plays an essential role in viral RNA replication by recruiting PI4KB at the viral replication sites, thereby allowing the formation of rearranged membranous structures where viral replication takes place. Its function is as follows. Forms a primer, VPg-pU, which is utilized by the polymerase for the initiation of RNA chains. Functionally, cysteine protease that generates mature viral proteins from the precursor polyprotein. In addition to its proteolytic activity, it binds to viral RNA, and thus influences viral genome replication. RNA and substrate cooperatively bind to the protease. In terms of biological role, replicates the genomic and antigenomic RNAs by recognizing replications specific signals. Performs VPg uridylylation. This is Genome polyprotein from Salivirus A (isolate Human/Nigeria/NG-J1/2007) (SV-A).